The sequence spans 550 residues: Arginine--tRNA ligase (550 aa).

The 'HIGH' region motif lies at 130 to 140 (ANPTGPIHIGG).

The protein belongs to the class-I aminoacyl-tRNA synthetase family. In terms of assembly, monomer.

It localises to the cytoplasm. The catalysed reaction is tRNA(Arg) + L-arginine + ATP = L-arginyl-tRNA(Arg) + AMP + diphosphate. This Mycobacterium leprae (strain TN) protein is Arginine--tRNA ligase (argS).